The sequence spans 87 residues: Small ribosomal subunit protein uS17 (87 aa).

Belongs to the universal ribosomal protein uS17 family. As to quaternary structure, part of the 30S ribosomal subunit.

In terms of biological role, one of the primary rRNA binding proteins, it binds specifically to the 5'-end of 16S ribosomal RNA. The chain is Small ribosomal subunit protein uS17 from Neisseria gonorrhoeae (strain ATCC 700825 / FA 1090).